The sequence spans 311 residues: tRNA-cytidine(32) 2-sulfurtransferase (311 aa).

The PP-loop motif motif lies at 47–52 (SGGKDS). [4Fe-4S] cluster contacts are provided by Cys122, Cys125, and Cys213.

This sequence belongs to the TtcA family. In terms of assembly, homodimer. Mg(2+) is required as a cofactor. The cofactor is [4Fe-4S] cluster.

Its subcellular location is the cytoplasm. It catalyses the reaction cytidine(32) in tRNA + S-sulfanyl-L-cysteinyl-[cysteine desulfurase] + AH2 + ATP = 2-thiocytidine(32) in tRNA + L-cysteinyl-[cysteine desulfurase] + A + AMP + diphosphate + H(+). Its pathway is tRNA modification. In terms of biological role, catalyzes the ATP-dependent 2-thiolation of cytidine in position 32 of tRNA, to form 2-thiocytidine (s(2)C32). The sulfur atoms are provided by the cysteine/cysteine desulfurase (IscS) system. The protein is tRNA-cytidine(32) 2-sulfurtransferase of Salmonella arizonae (strain ATCC BAA-731 / CDC346-86 / RSK2980).